Here is a 5085-residue protein sequence, read N- to C-terminus: Protein piccolo (5085 aa).

A compositionally biased stretch (low complexity) spans Met-1 to Ala-20. 2 disordered regions span residues Met-1 to Glu-142 and Asp-173 to Gln-516. A compositionally biased stretch (pro residues) spans Pro-92–Pro-101. Composition is skewed to basic and acidic residues over residues Arg-110–Leu-121, Lys-132–Glu-142, and Glu-184–Lys-198. 2 positions are modified to phosphoserine: Ser-211 and Ser-231. Residues Gln-227 to Ala-240 show a composition bias toward polar residues. Positions Pro-253–Pro-268 are enriched in low complexity. 3 stretches are compositionally biased toward polar residues: residues Gln-275–Gln-285, Lys-318–Gln-332, and Thr-375–Gly-391. Residues Pro-372–Thr-491 form a 12 X 10 AA tandem approximate repeats of P-A-K-P-Q-P-Q-Q-P-X region. Over residues Pro-392–Gln-408 the composition is skewed to pro residues. Positions Gln-409–Ala-423 are enriched in low complexity. Residues Lys-424–Ala-472 show a composition bias toward pro residues. The span at Ser-486–Thr-499 shows a compositional bias: polar residues. The C4-type zinc finger occupies Cys-523–Cys-547. Disordered regions lie at residues Ala-586–Gly-880, Leu-896–Leu-1012, Gln-1069–Leu-1357, Ser-1373–Val-1604, and Thr-1622–Glu-1815. Positions Pro-596–Ser-613 are enriched in low complexity. A compositionally biased stretch (basic and acidic residues) spans Pro-618–Lys-654. Low complexity predominate over residues Ala-672 to Pro-682. Residues Glu-683 to Pro-693 are compositionally biased toward pro residues. Residues Val-705–Ala-717 show a composition bias toward basic and acidic residues. Polar residues predominate over residues Asp-718–Leu-767. Residues Glu-790–Lys-808 are compositionally biased toward basic and acidic residues. A phosphoserine mark is found at Ser-857 and Ser-869. 3 stretches are compositionally biased toward polar residues: residues Pro-867–Val-878, Leu-896–His-906, and Gln-917–Gln-936. Thr-873 carries the post-translational modification Phosphothreonine. Residues Glu-990–Thr-1004 show a composition bias toward basic and acidic residues. The C4-type zinc-finger motif lies at Cys-1010–Cys-1033. Positions Pro-1077–Ala-1092 are enriched in pro residues. Residues Lys-1110 to Ser-1129 are compositionally biased toward basic and acidic residues. Phosphothreonine is present on Thr-1133. Basic and acidic residues-rich tracts occupy residues Gln-1141–Lys-1150, Pro-1157–Pro-1199, and Ser-1274–Asp-1295. A compositionally biased stretch (polar residues) spans Gln-1300–Ile-1318. 8 positions are modified to phosphoserine: Ser-1304, Ser-1314, Ser-1315, Ser-1344, Ser-1346, Ser-1349, Ser-1350, and Ser-1353. Residues Ser-1331–Phe-1345 are compositionally biased toward basic and acidic residues. Over residues Ser-1346 to Ser-1355 the composition is skewed to low complexity. Residues Glu-1378–Asp-1396 show a composition bias toward basic and acidic residues. Positions Gln-1397–Leu-1407 are enriched in polar residues. A compositionally biased stretch (basic and acidic residues) spans Lys-1417 to Ser-1456. Phosphoserine is present on residues Ser-1451, Ser-1463, Ser-1464, Ser-1466, Ser-1469, Ser-1493, Ser-1496, Ser-1517, and Ser-1519. A compositionally biased stretch (acidic residues) spans Ser-1511–Glu-1523. Phosphothreonine is present on Thr-1564. A phosphoserine mark is found at Ser-1565, Ser-1575, and Ser-1587. The segment covering Asp-1578–Ser-1587 has biased composition (acidic residues). Positions Pro-1588–Glu-1599 are enriched in basic and acidic residues. A compositionally biased stretch (polar residues) spans Thr-1622 to Lys-1635. A compositionally biased stretch (acidic residues) spans Phe-1640–Ser-1650. Position 1650 is a phosphoserine (Ser-1650). Phosphothreonine is present on Thr-1652. Phosphoserine is present on residues Ser-1654 and Ser-1659. The segment covering Glu-1662–Thr-1679 has biased composition (polar residues). Over residues Asp-1719–Leu-1732 the composition is skewed to acidic residues. 2 positions are modified to phosphoserine: Ser-1720 and Ser-1721. Residues Leu-1733 to Gln-1746 show a composition bias toward basic and acidic residues. Thr-1772 bears the Phosphothreonine mark. Ser-1778 carries the phosphoserine modification. The span at Glu-1787 to Ser-1802 shows a compositional bias: basic and acidic residues. Residues Ser-1807, Ser-1812, Ser-1820, and Ser-1841 each carry the phosphoserine modification. Disordered regions lie at residues Pro-2116 to Cys-2139, Glu-2275 to Pro-2385, and Lys-2456 to Ser-2486. Residues Thr-2121 to Cys-2139 are compositionally biased toward low complexity. The span at Gln-2350–Tyr-2384 shows a compositional bias: pro residues. Ser-2511 is modified (phosphoserine). Thr-2702 is a glycosylation site (O-linked (GlcNAc) threonine). The O-linked (GlcNAc) serine glycan is linked to Ser-2976. Residue Thr-3014 is modified to Phosphothreonine. 2 disordered regions span residues Lys-3350–Lys-3457 and Lys-3503–Pro-3572. The residue at position 3374 (Ser-3374) is a Phosphoserine. Positions Asp-3377–Val-3386 are enriched in basic and acidic residues. Ser-3388 is modified (phosphoserine). A phosphothreonine mark is found at Thr-3392 and Thr-3419. Acidic residues predominate over residues Thr-3419–Asp-3428. The span at Gly-3511 to Pro-3523 shows a compositional bias: polar residues. Ser-3522, Ser-3530, Ser-3561, Ser-3565, Ser-3571, Ser-3574, Ser-3577, Ser-3598, Ser-3624, Ser-3626, and Ser-3632 each carry phosphoserine. Disordered regions lie at residues Val-3602–Arg-3695 and Ala-3774–Pro-3816. Polar residues-rich tracts occupy residues Glu-3647–Gln-3663 and Ser-3679–Thr-3691. The residue at position 3781 (Ser-3781) is a Phosphoserine. Over residues Ser-3791 to Arg-3803 the composition is skewed to basic and acidic residues. Polar residues predominate over residues Ala-3805–Pro-3816. A phosphoserine mark is found at Ser-4034 and Ser-4150. Disordered regions lie at residues Ala-4225–Asp-4248 and Val-4272–Ser-4291. The segment covering Pro-4228 to Asp-4248 has biased composition (low complexity). The segment covering Gly-4275–Ser-4291 has biased composition (polar residues). Residues Ser-4304, Ser-4308, Ser-4311, Ser-4340, and Ser-4376 each carry the phosphoserine modification. The tract at residues Arg-4335–Thr-4357 is disordered. The region spanning Arg-4442 to Leu-4536 is the PDZ domain. Positions Val-4589–Pro-4638 are disordered. Residues Ala-4595 to Val-4618 are compositionally biased toward low complexity. Ser-4609 carries the post-translational modification Phosphoserine. One can recognise a C2 1 domain in the interval Ile-4639–Tyr-4768. Ca(2+) contacts are provided by Asp-4668 and Asp-4674. Ser-4723 carries the phosphoserine modification. The Ca(2+) site is built by Asp-4738, Asp-4740, Ser-4743, and Asp-4746. 2 disordered regions span residues Glu-4775–Gln-4851 and Gln-4874–Ser-4908. Low complexity-rich tracts occupy residues His-4783–Ser-4795 and Ser-4822–Glu-4832. Positions Pro-4840 to Gln-4851 are enriched in polar residues. Over residues Ser-4886–Ser-4908 the composition is skewed to low complexity. One can recognise a C2 2 domain in the interval Val-4950–His-5075.

In terms of assembly, interacts with BSN, ERC2/CAST1, RIMS1 and UNC13A. Interacts (via C-terminus) with TRIO (via N-terminus). Interacts with CTBP1. Interacts with SIAH1; this interaction negatively regulates SIAH1 E3 ligase activity. Directly interacts with GIT1 and GIT2. It depends on Ca(2+) as a cofactor. In terms of tissue distribution, expressed in brain (at protein level).

The protein localises to the presynaptic active zone. Functionally, scaffold protein of the presynaptic cytomatrix at the active zone (CAZ) which is the place in the synapse where neurotransmitter is released. After synthesis, participates in the formation of Golgi-derived membranous organelles termed Piccolo-Bassoon transport vesicles (PTVs) that are transported along axons to sites of nascent synaptic contacts. At the presynaptic active zone, regulates the spatial organization of synaptic vesicle cluster, the protein complexes that execute membrane fusion and compensatory endocytosis. Organizes as well the readily releasable pool of synaptic vesicles and safeguards a fraction of them to be not immediately available for action potential-induced release. Also functions in processes other than assembly such as the regulation of specific presynaptic protein ubiquitination by interacting with SIAH1 or the regulation of presynaptic autophagy. Also mediates synapse to nucleus communication leading to reconfiguration of gene expression by associating with the transcriptional corepressor CTBP1 and by subsequently reducing the size of its pool available for nuclear import. In Rattus norvegicus (Rat), this protein is Protein piccolo (Pclo).